The chain runs to 46 residues: uncharacterized protein (46 aa).

To equivalent protein in phage 82.

This is an uncharacterized protein from Escherichia coli (strain K12).